A 1054-amino-acid polypeptide reads, in one-letter code: Putative disease resistance RPP13-like protein 1 (1054 aa).

2 leucine-zipper regions span residues 9–20 (LAAFLQALFQTL) and 39–53 (LERL…TAVL). Positions 117 to 147 (DFLDGNSEHLETRLEKVTIRLERLASQRNIL) form a coiled coil. Positions 152-462 (LTAMIPKQRL…AEGFLQQTRS (311 aa)) constitute an NB-ARC domain. 203–210 (GIGGVGKT) is a binding site for ATP. 5 LRR repeats span residues 579-600 (RLRV…FFKN), 603-624 (HARF…LCYM), 626-648 (NLQT…ISNL), 650-672 (NLRY…GRLK), and 676-697 (TLTT…GGLH). Residues 1018–1054 (PQYHHPQFHLPRSNVSGSPKSHGSHRSYDSRSSSRYD) are disordered. A compositionally biased stretch (basic and acidic residues) spans 1043 to 1054 (RSYDSRSSSRYD).

It belongs to the disease resistance NB-LRR family. RPP13 subfamily.

Its function is as follows. Potential disease resistance protein. This chain is Putative disease resistance RPP13-like protein 1 (RPPL1), found in Arabidopsis thaliana (Mouse-ear cress).